An 88-amino-acid chain; its full sequence is CRISPR-associated endoribonuclease Cas2 2 (88 aa).

Residue aspartate 8 participates in Mg(2+) binding.

Belongs to the CRISPR-associated endoribonuclease Cas2 protein family. Homodimer, forms a heterotetramer with a Cas1 homodimer. Mg(2+) serves as cofactor.

Functionally, CRISPR (clustered regularly interspaced short palindromic repeat), is an adaptive immune system that provides protection against mobile genetic elements (viruses, transposable elements and conjugative plasmids). CRISPR clusters contain sequences complementary to antecedent mobile elements and target invading nucleic acids. CRISPR clusters are transcribed and processed into CRISPR RNA (crRNA). Functions as a ssRNA-specific endoribonuclease. Involved in the integration of spacer DNA into the CRISPR cassette. In Saccharolobus solfataricus (strain ATCC 35092 / DSM 1617 / JCM 11322 / P2) (Sulfolobus solfataricus), this protein is CRISPR-associated endoribonuclease Cas2 2 (cas22).